Reading from the N-terminus, the 260-residue chain is Phosphatidate cytidylyltransferase (260 aa).

7 consecutive transmembrane segments (helical) span residues 9-29 (IIALIVFLPILLKGGLVLMIF), 46-66 (MIKFVSVPGLISAVGLIIIML), 70-90 (AGPWVQVIQLKSLIAMSFIVL), 102-122 (FMDAAFCLMSVAYVGIGFMFF), 130-150 (LHYILYAFLIVWLTDTGAYLF), 172-192 (FIGGLFCSLIVPLAMLYFVDF), and 196-216 (VWILLGVTLILSLFGQLGDLV).

The protein belongs to the CDS family.

The protein localises to the cell membrane. The catalysed reaction is a 1,2-diacyl-sn-glycero-3-phosphate + CTP + H(+) = a CDP-1,2-diacyl-sn-glycerol + diphosphate. It participates in phospholipid metabolism; CDP-diacylglycerol biosynthesis; CDP-diacylglycerol from sn-glycerol 3-phosphate: step 3/3. This is Phosphatidate cytidylyltransferase (cdsA) from Staphylococcus aureus (strain COL).